Reading from the N-terminus, the 259-residue chain is Ribosomal RNA small subunit methyltransferase A (259 aa).

S-adenosyl-L-methionine contacts are provided by Asn13, Leu15, Gly40, Glu61, Asp85, and Asn103.

It belongs to the class I-like SAM-binding methyltransferase superfamily. rRNA adenine N(6)-methyltransferase family. RsmA subfamily.

Its subcellular location is the cytoplasm. It catalyses the reaction adenosine(1518)/adenosine(1519) in 16S rRNA + 4 S-adenosyl-L-methionine = N(6)-dimethyladenosine(1518)/N(6)-dimethyladenosine(1519) in 16S rRNA + 4 S-adenosyl-L-homocysteine + 4 H(+). Functionally, specifically dimethylates two adjacent adenosines (A1518 and A1519) in the loop of a conserved hairpin near the 3'-end of 16S rRNA in the 30S particle. May play a critical role in biogenesis of 30S subunits. This chain is Ribosomal RNA small subunit methyltransferase A, found in Neisseria gonorrhoeae (strain NCCP11945).